We begin with the raw amino-acid sequence, 268 residues long: Probable histidine-binding protein (268 aa).

Residues 1–20 (MNMKKWIAAALACSALALSA) form the signal peptide. A lipid anchor (N-palmitoyl cysteine) is attached at Cys21. A lipid anchor (S-diacylglycerol cysteine) is attached at Cys21.

This sequence belongs to the bacterial solute-binding protein 3 family.

It localises to the cell membrane. In terms of biological role, involved in histidine transport. The polypeptide is Probable histidine-binding protein (hisJ) (Neisseria gonorrhoeae).